The primary structure comprises 315 residues: Putative quercetin 2,3-dioxygenase PA1205 (315 aa).

A divalent metal cation-binding residues include histidine 77, histidine 79, histidine 121, and glutamate 123.

Belongs to the pirin family. The cofactor is a divalent metal cation.

The enzyme catalyses quercetin + O2 = 2-(3,4-dihydroxybenzoyloxy)-4,6-dihydroxybenzoate + CO. It participates in flavonoid metabolism; quercetin degradation. Its function is as follows. Putative quercetin 2,3-dioxygenase. The chain is Putative quercetin 2,3-dioxygenase PA1205 from Pseudomonas aeruginosa (strain ATCC 15692 / DSM 22644 / CIP 104116 / JCM 14847 / LMG 12228 / 1C / PRS 101 / PAO1).